The following is a 118-amino-acid chain: Large ribosomal subunit protein bL19 (118 aa).

The protein belongs to the bacterial ribosomal protein bL19 family.

In terms of biological role, this protein is located at the 30S-50S ribosomal subunit interface and may play a role in the structure and function of the aminoacyl-tRNA binding site. In Helicobacter acinonychis (strain Sheeba), this protein is Large ribosomal subunit protein bL19.